Here is a 296-residue protein sequence, read N- to C-terminus: Nitrogenase iron protein 2 (296 aa).

11–18 provides a ligand contact to ATP; that stretch reads GKGGIGKS. Cysteine 99 is a binding site for [4Fe-4S] cluster. Arginine 102 carries the ADP-ribosylarginine; by dinitrogenase reductase ADP-ribosyltransferase modification. A [4Fe-4S] cluster-binding site is contributed by cysteine 133.

Belongs to the NifH/BchL/ChlL family. As to quaternary structure, homodimer. [4Fe-4S] cluster serves as cofactor. Post-translationally, the reversible ADP-ribosylation of Arg-102 inactivates the nitrogenase reductase and regulates nitrogenase activity.

It catalyses the reaction N2 + 8 reduced [2Fe-2S]-[ferredoxin] + 16 ATP + 16 H2O = H2 + 8 oxidized [2Fe-2S]-[ferredoxin] + 2 NH4(+) + 16 ADP + 16 phosphate + 6 H(+). In terms of biological role, the key enzymatic reactions in nitrogen fixation are catalyzed by the nitrogenase complex, which has 2 components: the iron protein and the molybdenum-iron protein. The protein is Nitrogenase iron protein 2 (nifH2) of Azorhizobium caulinodans (strain ATCC 43989 / DSM 5975 / JCM 20966 / LMG 6465 / NBRC 14845 / NCIMB 13405 / ORS 571).